The chain runs to 413 residues: uncharacterized protein (413 aa).

This is an uncharacterized protein from Bacillus subtilis (strain 168).